A 393-amino-acid polypeptide reads, in one-letter code: DNA-directed RNA polymerase subunit Rpo1C (393 aa).

Belongs to the RNA polymerase beta' chain family. In terms of assembly, part of the RNA polymerase complex.

The protein localises to the cytoplasm. The enzyme catalyses RNA(n) + a ribonucleoside 5'-triphosphate = RNA(n+1) + diphosphate. In terms of biological role, DNA-dependent RNA polymerase (RNAP) catalyzes the transcription of DNA into RNA using the four ribonucleoside triphosphates as substrates. Forms part of the jaw domain. In Halococcus morrhuae (Micrococcus morrhuae), this protein is DNA-directed RNA polymerase subunit Rpo1C.